The following is a 38-amino-acid chain: Photosystem II reaction center protein L (38 aa).

Residues 17–37 form a helical membrane-spanning segment; sequence SLFWGLLLIFVLAVLFSSYFF.

This sequence belongs to the PsbL family. PSII is composed of 1 copy each of membrane proteins PsbA, PsbB, PsbC, PsbD, PsbE, PsbF, PsbH, PsbI, PsbJ, PsbK, PsbL, PsbM, PsbT, PsbX, PsbY, PsbZ, Psb30/Ycf12, at least 3 peripheral proteins of the oxygen-evolving complex and a large number of cofactors. It forms dimeric complexes.

It is found in the plastid. Its subcellular location is the chloroplast thylakoid membrane. One of the components of the core complex of photosystem II (PSII). PSII is a light-driven water:plastoquinone oxidoreductase that uses light energy to abstract electrons from H(2)O, generating O(2) and a proton gradient subsequently used for ATP formation. It consists of a core antenna complex that captures photons, and an electron transfer chain that converts photonic excitation into a charge separation. This subunit is found at the monomer-monomer interface and is required for correct PSII assembly and/or dimerization. The sequence is that of Photosystem II reaction center protein L from Porphyra purpurea (Red seaweed).